We begin with the raw amino-acid sequence, 142 residues long: Hemoglobin subunit alpha-1 (142 aa).

The region spanning 2–142 (LLSADDKKHI…VSSVLTSKYR (141 aa)) is the Globin domain. Residue H59 participates in O2 binding. H88 lines the heme b pocket.

This sequence belongs to the globin family. Heterotetramer of two alpha chains and two beta chains. As to expression, red blood cells.

Functionally, involved in oxygen transport from the lung to the various peripheral tissues. This is Hemoglobin subunit alpha-1 (hba1) from Xenopus borealis (Kenyan clawed frog).